The chain runs to 306 residues: Ornithine carbamoyltransferase (306 aa).

Carbamoyl phosphate is bound by residues 46 to 49 (STRT), Gln73, Arg97, and 124 to 127 (HPTQ). L-ornithine-binding positions include Asn156, Asp220, and 224–225 (SM). Residues 260 to 261 (CL) and Arg288 contribute to the carbamoyl phosphate site.

The protein belongs to the aspartate/ornithine carbamoyltransferase superfamily. OTCase family.

The protein resides in the cytoplasm. The enzyme catalyses carbamoyl phosphate + L-ornithine = L-citrulline + phosphate + H(+). Its pathway is amino-acid degradation; L-arginine degradation via ADI pathway; carbamoyl phosphate from L-arginine: step 2/2. Its function is as follows. Reversibly catalyzes the transfer of the carbamoyl group from carbamoyl phosphate (CP) to the N(epsilon) atom of ornithine (ORN) to produce L-citrulline. This Campylobacter jejuni subsp. doylei (strain ATCC BAA-1458 / RM4099 / 269.97) protein is Ornithine carbamoyltransferase.